A 467-amino-acid polypeptide reads, in one-letter code: Argininosuccinate lyase (467 aa).

This sequence belongs to the lyase 1 family. Argininosuccinate lyase subfamily.

The protein localises to the cytoplasm. The catalysed reaction is 2-(N(omega)-L-arginino)succinate = fumarate + L-arginine. It participates in amino-acid biosynthesis; L-arginine biosynthesis; L-arginine from L-ornithine and carbamoyl phosphate: step 3/3. The polypeptide is Argininosuccinate lyase (Methylibium petroleiphilum (strain ATCC BAA-1232 / LMG 22953 / PM1)).